The chain runs to 339 residues: Ketol-acid reductoisomerase (NADP(+)) (339 aa).

The 182-residue stretch at 1 to 182 folds into the KARI N-terminal Rossmann domain; it reads MRVYYDRDAD…GGGRAGIIET (182 aa). NADP(+) is bound by residues 24–27, R48, S51, T53, and 83–86; these read YGSQ and DELQ. H108 is a catalytic residue. Residue G134 coordinates NADP(+). Residues 183–328 enclose the KARI C-terminal knotted domain; that stretch reads TFREECETDL…ARLREMMPWI (146 aa). Positions 191, 195, 227, and 231 each coordinate Mg(2+). S252 provides a ligand contact to substrate.

Belongs to the ketol-acid reductoisomerase family. Mg(2+) serves as cofactor.

The catalysed reaction is (2R)-2,3-dihydroxy-3-methylbutanoate + NADP(+) = (2S)-2-acetolactate + NADPH + H(+). The enzyme catalyses (2R,3R)-2,3-dihydroxy-3-methylpentanoate + NADP(+) = (S)-2-ethyl-2-hydroxy-3-oxobutanoate + NADPH + H(+). Its pathway is amino-acid biosynthesis; L-isoleucine biosynthesis; L-isoleucine from 2-oxobutanoate: step 2/4. It participates in amino-acid biosynthesis; L-valine biosynthesis; L-valine from pyruvate: step 2/4. In terms of biological role, involved in the biosynthesis of branched-chain amino acids (BCAA). Catalyzes an alkyl-migration followed by a ketol-acid reduction of (S)-2-acetolactate (S2AL) to yield (R)-2,3-dihydroxy-isovalerate. In the isomerase reaction, S2AL is rearranged via a Mg-dependent methyl migration to produce 3-hydroxy-3-methyl-2-ketobutyrate (HMKB). In the reductase reaction, this 2-ketoacid undergoes a metal-dependent reduction by NADPH to yield (R)-2,3-dihydroxy-isovalerate. The protein is Ketol-acid reductoisomerase (NADP(+)) of Parvibaculum lavamentivorans (strain DS-1 / DSM 13023 / NCIMB 13966).